The sequence spans 354 residues: 3-isopropylmalate dehydrogenase (354 aa).

73-86 (GPAYDKLDRPLRPE) contacts NAD(+). Positions 93, 103, 131, and 221 each coordinate substrate. Positions 221, 245, and 249 each coordinate Mg(2+). 279-291 (GSAPDIAGQNLAN) contributes to the NAD(+) binding site.

This sequence belongs to the isocitrate and isopropylmalate dehydrogenases family. LeuB type 1 subfamily. Homodimer. The cofactor is Mg(2+). Mn(2+) is required as a cofactor.

It localises to the cytoplasm. The catalysed reaction is (2R,3S)-3-isopropylmalate + NAD(+) = 4-methyl-2-oxopentanoate + CO2 + NADH. Its pathway is amino-acid biosynthesis; L-leucine biosynthesis; L-leucine from 3-methyl-2-oxobutanoate: step 3/4. In terms of biological role, catalyzes the oxidation of 3-carboxy-2-hydroxy-4-methylpentanoate (3-isopropylmalate) to 3-carboxy-4-methyl-2-oxopentanoate. The product decarboxylates to 4-methyl-2 oxopentanoate. This Chromobacterium violaceum (strain ATCC 12472 / DSM 30191 / JCM 1249 / CCUG 213 / NBRC 12614 / NCIMB 9131 / NCTC 9757 / MK) protein is 3-isopropylmalate dehydrogenase.